Here is a 431-residue protein sequence, read N- to C-terminus: GTPase Obg (431 aa).

One can recognise an Obg domain in the interval 1-158 (MFVDQVKINV…REIRLELKVL (158 aa)). The disordered stretch occupies residues 125–145 (GNIHFASPKNPAPEIAENGEP). The OBG-type G domain maps to 159 to 335 (ADVGLVGFPS…LLQRTADMLA (177 aa)). Residues 165 to 172 (GFPSVGKS), 190 to 194 (FTTLV), 212 to 215 (DLPG), 282 to 285 (NKMD), and 316 to 318 (SAL) each bind GTP. 2 residues coordinate Mg(2+): Ser172 and Thr192. In terms of domain architecture, OCT spans 353-431 (YNFQPEAEFT…IDDFTFEYMA (79 aa)).

This sequence belongs to the TRAFAC class OBG-HflX-like GTPase superfamily. OBG GTPase family. In terms of assembly, monomer. Mg(2+) serves as cofactor.

It localises to the cytoplasm. An essential GTPase which binds GTP, GDP and possibly (p)ppGpp with moderate affinity, with high nucleotide exchange rates and a fairly low GTP hydrolysis rate. Plays a role in control of the cell cycle, stress response, ribosome biogenesis and in those bacteria that undergo differentiation, in morphogenesis control. In Levilactobacillus brevis (strain ATCC 367 / BCRC 12310 / CIP 105137 / JCM 1170 / LMG 11437 / NCIMB 947 / NCTC 947) (Lactobacillus brevis), this protein is GTPase Obg.